A 362-amino-acid chain; its full sequence is Phosphoserine aminotransferase (362 aa).

Ser9 and Arg42 together coordinate L-glutamate. Residues 76–77 (GR), Trp102, Thr153, Asp174, and Gln197 contribute to the pyridoxal 5'-phosphate site. Position 198 is an N6-(pyridoxal phosphate)lysine (Lys198). A pyridoxal 5'-phosphate-binding site is contributed by 239-240 (NT).

This sequence belongs to the class-V pyridoxal-phosphate-dependent aminotransferase family. SerC subfamily. Homodimer. Pyridoxal 5'-phosphate serves as cofactor.

It localises to the cytoplasm. It catalyses the reaction O-phospho-L-serine + 2-oxoglutarate = 3-phosphooxypyruvate + L-glutamate. The catalysed reaction is 4-(phosphooxy)-L-threonine + 2-oxoglutarate = (R)-3-hydroxy-2-oxo-4-phosphooxybutanoate + L-glutamate. The protein operates within amino-acid biosynthesis; L-serine biosynthesis; L-serine from 3-phospho-D-glycerate: step 2/3. It functions in the pathway cofactor biosynthesis; pyridoxine 5'-phosphate biosynthesis; pyridoxine 5'-phosphate from D-erythrose 4-phosphate: step 3/5. Its function is as follows. Catalyzes the reversible conversion of 3-phosphohydroxypyruvate to phosphoserine and of 3-hydroxy-2-oxo-4-phosphonooxybutanoate to phosphohydroxythreonine. This is Phosphoserine aminotransferase from Klebsiella pneumoniae subsp. pneumoniae (strain ATCC 700721 / MGH 78578).